The sequence spans 110 residues: Glutaredoxin-2 (110 aa).

A Glutaredoxin domain is found at 6–106; the sequence is KAFVEKAISN…KMIAELKENK (101 aa). Residues C26 and C29 are joined by a disulfide bond.

Belongs to the glutaredoxin family.

Functionally, the disulfide bond functions as an electron carrier in the glutathione-dependent synthesis of deoxyribonucleotides by the enzyme ribonucleotide reductase. In addition, it is also involved in reducing some disulfides in a coupled system with glutathione reductase. Thioltransferase catalyzes cellular thiol-disulfide transhydrogenation reactions. It transfers reducing equivalents to cytosolic protein and nonprotein disulfides. The sequence is that of Glutaredoxin-2 (grx2) from Schizosaccharomyces pombe (strain 972 / ATCC 24843) (Fission yeast).